The following is a 498-amino-acid chain: Ammonium transporter 1 member 3 (498 aa).

11 helical membrane passes run 41–61 (LLFS…LCAG), 76–96 (VLDA…FAFG), 122–142 (FFLF…GSIA), 150–170 (YLIY…HWFW), 194–214 (FAGS…GAFI), 238–258 (LVVL…PGSF), 277–299 (AVGR…TLYG), 307–327 (WNVT…TAGC), 329–349 (VVDP…LIGC), 362–382 (LEAT…TALF), and 414–434 (IVQI…LFYV). The interval 473–498 (RAKSAAETARVEPRKSPEQAAAGQFV) is disordered.

This sequence belongs to the ammonia transporter channel (TC 1.A.11.2) family. Expressed in roots.

The protein localises to the membrane. Functionally, ammonium transporter probably involved in ammonium uptake from the soil. This is Ammonium transporter 1 member 3 (AMT1-3) from Oryza sativa subsp. japonica (Rice).